Reading from the N-terminus, the 183-residue chain is ATP synthase subunit delta (183 aa).

Belongs to the ATPase delta chain family. As to quaternary structure, F-type ATPases have 2 components, F(1) - the catalytic core - and F(0) - the membrane proton channel. F(1) has five subunits: alpha(3), beta(3), gamma(1), delta(1), epsilon(1). F(0) has three main subunits: a(1), b(2) and c(10-14). The alpha and beta chains form an alternating ring which encloses part of the gamma chain. F(1) is attached to F(0) by a central stalk formed by the gamma and epsilon chains, while a peripheral stalk is formed by the delta and b chains.

It is found in the cell inner membrane. Its function is as follows. F(1)F(0) ATP synthase produces ATP from ADP in the presence of a proton or sodium gradient. F-type ATPases consist of two structural domains, F(1) containing the extramembraneous catalytic core and F(0) containing the membrane proton channel, linked together by a central stalk and a peripheral stalk. During catalysis, ATP synthesis in the catalytic domain of F(1) is coupled via a rotary mechanism of the central stalk subunits to proton translocation. In terms of biological role, this protein is part of the stalk that links CF(0) to CF(1). It either transmits conformational changes from CF(0) to CF(1) or is implicated in proton conduction. The polypeptide is ATP synthase subunit delta (Ruthia magnifica subsp. Calyptogena magnifica).